The sequence spans 255 residues: Small ribosomal subunit protein eS4 (255 aa).

One can recognise an S4 RNA-binding domain in the interval 43 to 115 (IPLLILVRDV…PTRFFTLHPI (73 aa)).

It belongs to the eukaryotic ribosomal protein eS4 family.

This chain is Small ribosomal subunit protein eS4, found in Hyperthermus butylicus (strain DSM 5456 / JCM 9403 / PLM1-5).